The primary structure comprises 115 residues: MMSDDIVLPLQFTDAAANKVKILVSDEENPNLRLRVYITGGGCSGFQYGFTFDDQINEGDMTIEKQGVELVVDPMSLQYLVGGCVDYTEGLEGSRFIVTNPNAKTTCGCGSSFSI.

Iron-sulfur cluster-binding residues include C43, C107, and C109.

This sequence belongs to the HesB/IscA family. Homodimer. Requires iron-sulfur cluster as cofactor.

Its function is as follows. Required for insertion of 4Fe-4S clusters for at least IspG. This is Iron-sulfur cluster insertion protein ErpA from Photorhabdus laumondii subsp. laumondii (strain DSM 15139 / CIP 105565 / TT01) (Photorhabdus luminescens subsp. laumondii).